The chain runs to 231 residues: Small ribosomal subunit protein uS3c (231 aa).

Positions 39 to 123 (LRNFIKKKYI…HLRLSVKPLR (85 aa)) constitute a KH type-2 domain.

It belongs to the universal ribosomal protein uS3 family. Part of the 30S ribosomal subunit.

The protein localises to the plastid. Its subcellular location is the chloroplast. The polypeptide is Small ribosomal subunit protein uS3c (rps3) (Chlorella vulgaris (Green alga)).